The chain runs to 179 residues: Ubiquitin-conjugating enzyme E2 C (179 aa).

The residue at position 2 (Ala2) is an N-acetylalanine. Position 3 is a phosphoserine (Ser3). Residues 30 to 175 (PVGKRLQQEL…LQETYSKQVS (146 aa)) form the UBC core domain. The active-site Glycyl thioester intermediate is Cys114.

This sequence belongs to the ubiquitin-conjugating enzyme family. In terms of assembly, component of the APC/C complex, composed of at least 14 distinct subunits that assemble into a complex of at least 19 chains with a combined molecular mass of around 1.2 MDa. Within this complex, directly interacts with ANAPC2. In terms of processing, autoubiquitinated by the APC/C complex, leading to its degradation by the proteasome. Its degradation plays a central role in APC/C regulation, allowing cyclin-A accumulation before S phase entry. APC/C substrates inhibit the autoubiquitination of UBE2C/UBCH10 but not its E2 function, hence APC/C remaining active until its substrates have been destroyed.

It carries out the reaction S-ubiquitinyl-[E1 ubiquitin-activating enzyme]-L-cysteine + [E2 ubiquitin-conjugating enzyme]-L-cysteine = [E1 ubiquitin-activating enzyme]-L-cysteine + S-ubiquitinyl-[E2 ubiquitin-conjugating enzyme]-L-cysteine.. The enzyme catalyses S-ubiquitinyl-[E1 ubiquitin-activating enzyme]-L-cysteine + [acceptor protein]-L-lysine = [E1 ubiquitin-activating enzyme]-L-cysteine + N(6)-monoubiquitinyl-[acceptor protein]-L-lysine.. It functions in the pathway protein modification; protein ubiquitination. In terms of biological role, accepts ubiquitin from the E1 complex and catalyzes its covalent attachment to other proteins. In vitro catalyzes 'Lys-11'- and 'Lys-48'-linked polyubiquitination. Acts as an essential factor of the anaphase promoting complex/cyclosome (APC/C), a cell cycle-regulated ubiquitin ligase that controls progression through mitosis. Acts by initiating 'Lys-11'-linked polyubiquitin chains on APC/C substrates, leading to the degradation of APC/C substrates by the proteasome and promoting mitotic exit. The protein is Ubiquitin-conjugating enzyme E2 C (Ube2c) of Mus musculus (Mouse).